The sequence spans 151 residues: U-scoloptoxin(17)-Er2a (151 aa).

The N-terminal stretch at methionine 1–alanine 22 is a signal peptide.

This sequence belongs to the scoloptoxin-17 family. In terms of processing, contains 5 disulfide bonds. In terms of tissue distribution, expressed by the venom gland.

It localises to the secreted. The chain is U-scoloptoxin(17)-Er2a from Ethmostigmus rubripes (Giant centipede).